We begin with the raw amino-acid sequence, 271 residues long: Urease accessory protein UreD (271 aa).

The protein belongs to the UreD family. UreD, UreF and UreG form a complex that acts as a GTP-hydrolysis-dependent molecular chaperone, activating the urease apoprotein by helping to assemble the nickel containing metallocenter of UreC. The UreE protein probably delivers the nickel.

It is found in the cytoplasm. Functionally, required for maturation of urease via the functional incorporation of the urease nickel metallocenter. The sequence is that of Urease accessory protein UreD from Azorhizobium caulinodans (strain ATCC 43989 / DSM 5975 / JCM 20966 / LMG 6465 / NBRC 14845 / NCIMB 13405 / ORS 571).